Consider the following 1463-residue polypeptide: DNA polymerase III PolC-type (1463 aa).

An Exonuclease domain is found at 425–581; sequence YVVFDVETTG…YDAEATGRLL (157 aa).

This sequence belongs to the DNA polymerase type-C family. PolC subfamily.

It localises to the cytoplasm. It catalyses the reaction DNA(n) + a 2'-deoxyribonucleoside 5'-triphosphate = DNA(n+1) + diphosphate. In terms of biological role, required for replicative DNA synthesis. This DNA polymerase also exhibits 3' to 5' exonuclease activity. In Streptococcus pneumoniae serotype 2 (strain D39 / NCTC 7466), this protein is DNA polymerase III PolC-type.